The primary structure comprises 259 residues: Ribosomal RNA large subunit methyltransferase E (259 aa).

Residues Gly-58, Trp-60, Asp-78, Asp-96, and Asp-120 each contribute to the S-adenosyl-L-methionine site. Lys-160 serves as the catalytic Proton acceptor.

The protein belongs to the class I-like SAM-binding methyltransferase superfamily. RNA methyltransferase RlmE family.

It localises to the cytoplasm. The enzyme catalyses uridine(2552) in 23S rRNA + S-adenosyl-L-methionine = 2'-O-methyluridine(2552) in 23S rRNA + S-adenosyl-L-homocysteine + H(+). Specifically methylates the uridine in position 2552 of 23S rRNA at the 2'-O position of the ribose in the fully assembled 50S ribosomal subunit. In Methanococcus vannielii (strain ATCC 35089 / DSM 1224 / JCM 13029 / OCM 148 / SB), this protein is Ribosomal RNA large subunit methyltransferase E.